Reading from the N-terminus, the 452-residue chain is Probable phosphoglucosamine mutase (452 aa).

Ser96 serves as the catalytic Phosphoserine intermediate. Residues Ser96, Asp233, Asp235, and Asp237 each coordinate Mg(2+). The residue at position 96 (Ser96) is a Phosphoserine.

It belongs to the phosphohexose mutase family. The cofactor is Mg(2+). In terms of processing, activated by phosphorylation.

It catalyses the reaction alpha-D-glucosamine 1-phosphate = D-glucosamine 6-phosphate. Catalyzes the conversion of glucosamine-6-phosphate to glucosamine-1-phosphate. The chain is Probable phosphoglucosamine mutase from Pyrococcus furiosus (strain ATCC 43587 / DSM 3638 / JCM 8422 / Vc1).